Reading from the N-terminus, the 153-residue chain is SsrA-binding protein (153 aa).

Over residues 133 to 143 (ADLKERDDKRQ) the composition is skewed to basic and acidic residues. The segment at 133–153 (ADLKERDDKRQMQQALKQQQY) is disordered. The segment covering 144–153 (MQQALKQQQY) has biased composition (low complexity).

It belongs to the SmpB family.

It is found in the cytoplasm. In terms of biological role, required for rescue of stalled ribosomes mediated by trans-translation. Binds to transfer-messenger RNA (tmRNA), required for stable association of tmRNA with ribosomes. tmRNA and SmpB together mimic tRNA shape, replacing the anticodon stem-loop with SmpB. tmRNA is encoded by the ssrA gene; the 2 termini fold to resemble tRNA(Ala) and it encodes a 'tag peptide', a short internal open reading frame. During trans-translation Ala-aminoacylated tmRNA acts like a tRNA, entering the A-site of stalled ribosomes, displacing the stalled mRNA. The ribosome then switches to translate the ORF on the tmRNA; the nascent peptide is terminated with the 'tag peptide' encoded by the tmRNA and targeted for degradation. The ribosome is freed to recommence translation, which seems to be the essential function of trans-translation. The chain is SsrA-binding protein from Protochlamydia amoebophila (strain UWE25).